Reading from the N-terminus, the 181-residue chain is UPF0232 protein SAV_4320 (181 aa).

Residues 1 to 10 show a composition bias toward polar residues; it reads MSDTPAQTPE. 2 disordered regions span residues 1–64 and 156–181; these read MSDT…GRDP and QGPG…DTYG. The span at 30–39 shows a compositional bias: basic and acidic residues; it reads AAKEQARARG.

This sequence belongs to the UPF0232 family.

In Streptomyces avermitilis (strain ATCC 31267 / DSM 46492 / JCM 5070 / NBRC 14893 / NCIMB 12804 / NRRL 8165 / MA-4680), this protein is UPF0232 protein SAV_4320.